Here is a 307-residue protein sequence, read N- to C-terminus: Probable RuBisCO transcriptional regulator (307 aa).

The HTH lysR-type domain occupies 4-61 (FTLQQLRILKAVATEKNFTKAAELLYLSQPSLSKQIKTLEKNLDILLVNRENNKISLT). Positions 21-40 (FTKAAELLYLSQPSLSKQIK) form a DNA-binding region, H-T-H motif.

The protein belongs to the LysR transcriptional regulatory family.

It is found in the plastid. Its subcellular location is the chloroplast. Functionally, trans-acting transcriptional regulator of RuBisCO genes (rbcL and rbcS) expression. This is Probable RuBisCO transcriptional regulator (rbcR) from Phaeodactylum tricornutum (strain CCAP 1055/1).